The following is a 407-amino-acid chain: tRNA pseudouridine synthase 4 (407 aa).

A disordered region spans residues 83-105 (FRPAPPHPNDRNRRRRKSNRLPD). Residue aspartate 115 is the Nucleophile of the active site. Positions 274 to 298 (TEQDINPQDGDEKINAKSPTTNSVT) are disordered. At serine 291 the chain carries Phosphoserine. Threonine 293 carries the phosphothreonine modification. Serine 296 carries the phosphoserine modification. Threonine 406 carries the phosphothreonine modification.

This sequence belongs to the pseudouridine synthase TruB family.

It is found in the nucleus. The protein resides in the mitochondrion. It catalyses the reaction uridine(55) in tRNA = pseudouridine(55) in tRNA. It carries out the reaction a uridine in mRNA = a pseudouridine in mRNA. In terms of biological role, responsible for synthesis of pseudouridine from uracil-55 in the psi GC loop of transfer RNAs. Also catalyzes pseudouridylation of mRNAs with the consensus sequence 5'-GGUUCRA-3'. The sequence is that of tRNA pseudouridine synthase 4 from Schizosaccharomyces pombe (strain 972 / ATCC 24843) (Fission yeast).